The primary structure comprises 392 residues: Probable tRNA pseudouridine synthase D 1 (392 aa).

The Nucleophile role is filled by aspartate 92. A TRUD domain is found at 167–354 (YFLNYYGVQR…FIGDRRAMIG (188 aa)).

Belongs to the pseudouridine synthase TruD family.

The enzyme catalyses uridine(13) in tRNA = pseudouridine(13) in tRNA. Functionally, could be responsible for synthesis of pseudouridine from uracil-13 in transfer RNAs. The chain is Probable tRNA pseudouridine synthase D 1 from Methanocaldococcus jannaschii (strain ATCC 43067 / DSM 2661 / JAL-1 / JCM 10045 / NBRC 100440) (Methanococcus jannaschii).